Reading from the N-terminus, the 327-residue chain is tRNA-modifying protein YgfZ (327 aa).

2 residues coordinate folate: Trp27 and Trp189.

The protein belongs to the tRNA-modifying YgfZ family.

The protein resides in the cytoplasm. Its function is as follows. Folate-binding protein involved in regulating the level of ATP-DnaA and in the modification of some tRNAs. It is probably a key factor in regulatory networks that act via tRNA modification, such as initiation of chromosomal replication. This chain is tRNA-modifying protein YgfZ, found in Klebsiella pneumoniae (strain 342).